A 279-amino-acid polypeptide reads, in one-letter code: Putative pyruvate, phosphate dikinase regulatory protein (279 aa).

153–160 (GVSRTSKT) contributes to the ADP binding site.

This sequence belongs to the pyruvate, phosphate/water dikinase regulatory protein family. PDRP subfamily.

The catalysed reaction is N(tele)-phospho-L-histidyl/L-threonyl-[pyruvate, phosphate dikinase] + ADP = N(tele)-phospho-L-histidyl/O-phospho-L-threonyl-[pyruvate, phosphate dikinase] + AMP + H(+). It carries out the reaction N(tele)-phospho-L-histidyl/O-phospho-L-threonyl-[pyruvate, phosphate dikinase] + phosphate + H(+) = N(tele)-phospho-L-histidyl/L-threonyl-[pyruvate, phosphate dikinase] + diphosphate. In terms of biological role, bifunctional serine/threonine kinase and phosphorylase involved in the regulation of the pyruvate, phosphate dikinase (PPDK) by catalyzing its phosphorylation/dephosphorylation. This Rhodopseudomonas palustris (strain HaA2) protein is Putative pyruvate, phosphate dikinase regulatory protein.